Consider the following 271-residue polypeptide: Shikimate dehydrogenase (NADP(+)) (271 aa).

Shikimate contacts are provided by residues 15–17 and threonine 62; that span reads SKS. Lysine 66 functions as the Proton acceptor in the catalytic mechanism. Glutamate 78 is a binding site for NADP(+). 2 residues coordinate shikimate: asparagine 87 and aspartate 103. Residues 127–131, 151–156, and methionine 214 each bind NADP(+); these read GAGGA and NRTQAK. Residue tyrosine 216 participates in shikimate binding. Residue glycine 238 coordinates NADP(+).

It belongs to the shikimate dehydrogenase family. Homodimer.

The enzyme catalyses shikimate + NADP(+) = 3-dehydroshikimate + NADPH + H(+). It functions in the pathway metabolic intermediate biosynthesis; chorismate biosynthesis; chorismate from D-erythrose 4-phosphate and phosphoenolpyruvate: step 4/7. Functionally, involved in the biosynthesis of the chorismate, which leads to the biosynthesis of aromatic amino acids. Catalyzes the reversible NADPH linked reduction of 3-dehydroshikimate (DHSA) to yield shikimate (SA). The protein is Shikimate dehydrogenase (NADP(+)) of Shewanella pealeana (strain ATCC 700345 / ANG-SQ1).